The sequence spans 240 residues: MARRPRRSDSSSAEPTLSPQHLLALVRSTIPPIHPAGRPFIAAGLAVAGVGYRHRWARRTGLLAAGACAGFFRHPPRVPPSRAGAIVAPADGVICVIDTAAPPAELSMGDAPLPRVSIFLSVFDAHVQRAPVSGEVVAVQHRPGRFGSADLPAASNDNERNSVRIRTANGAEVVAVQVAGLVARRIVCDAHVGDKLAIGDTYGLIRFGSRLDTYLPPGTEPVVIVGQRTIAGETILADLP.

Serine 209 serves as the catalytic Schiff-base intermediate with substrate; via pyruvic acid. Position 209 is a pyruvic acid (Ser); by autocatalysis (serine 209).

It belongs to the phosphatidylserine decarboxylase family. PSD-A subfamily. Heterodimer of a large membrane-associated beta subunit and a small pyruvoyl-containing alpha subunit. The cofactor is pyruvate. In terms of processing, is synthesized initially as an inactive proenzyme. Formation of the active enzyme involves a self-maturation process in which the active site pyruvoyl group is generated from an internal serine residue via an autocatalytic post-translational modification. Two non-identical subunits are generated from the proenzyme in this reaction, and the pyruvate is formed at the N-terminus of the alpha chain, which is derived from the carboxyl end of the proenzyme. The post-translation cleavage follows an unusual pathway, termed non-hydrolytic serinolysis, in which the side chain hydroxyl group of the serine supplies its oxygen atom to form the C-terminus of the beta chain, while the remainder of the serine residue undergoes an oxidative deamination to produce ammonia and the pyruvoyl prosthetic group on the alpha chain.

The protein localises to the cell membrane. It catalyses the reaction a 1,2-diacyl-sn-glycero-3-phospho-L-serine + H(+) = a 1,2-diacyl-sn-glycero-3-phosphoethanolamine + CO2. It functions in the pathway phospholipid metabolism; phosphatidylethanolamine biosynthesis; phosphatidylethanolamine from CDP-diacylglycerol: step 2/2. Functionally, catalyzes the formation of phosphatidylethanolamine (PtdEtn) from phosphatidylserine (PtdSer). This Mycobacterium ulcerans (strain Agy99) protein is Phosphatidylserine decarboxylase proenzyme.